Consider the following 200-residue polypeptide: HTH-type transcriptional regulator BetI (200 aa).

An HTH tetR-type domain is found at 8-68 (SIRKQQLIQA…AAMRHIQYQL (61 aa)). The segment at residues 31 to 50 (SIALIARKAGVSNGIISHYF) is a DNA-binding region (H-T-H motif).

The protein operates within amine and polyamine biosynthesis; betaine biosynthesis via choline pathway [regulation]. Its function is as follows. Repressor involved in the biosynthesis of the osmoprotectant glycine betaine. It represses transcription of the choline transporter BetT and the genes of BetAB involved in the synthesis of glycine betaine. This is HTH-type transcriptional regulator BetI from Proteus mirabilis (strain HI4320).